Here is a 552-residue protein sequence, read N- to C-terminus: Putative transport protein HSM_0534 (552 aa).

A run of 5 helical transmembrane segments spans residues 4–24, 28–48, 67–87, 95–115, and 157–177; these read IAIT…IGHW, GVGL…HFMN, LILF…ASLL, GLAT…YKVV, and MAYA…MWLI. RCK C-terminal domains are found at residues 190–275 and 277–360; these read KQFQ…VIGE and IDMP…IIGN. Helical transmembrane passes span 370–390, 402–424, 438–458, 463–483, 495–515, and 529–549; these read MLPV…PFYI, AGGP…LYWF, IVLF…DTLV, LEWM…TGII, LCGL…ANAI, and VYPL…ILLW.

The protein belongs to the AAE transporter (TC 2.A.81) family. YidE subfamily.

The protein resides in the cell membrane. In Histophilus somni (strain 2336) (Haemophilus somnus), this protein is Putative transport protein HSM_0534.